The chain runs to 546 residues: Chaperonin GroEL (546 aa).

Residues 30 to 33, lysine 51, 87 to 91, glycine 415, 479 to 481, and aspartate 495 each bind ATP; these read TLGP, DGTTT, and NAA. The tract at residues 526-546 is disordered; sequence KKDEPAMPAGGGMGGMGGMDF. A compositionally biased stretch (gly residues) spans 534–546; it reads AGGGMGGMGGMDF.

The protein belongs to the chaperonin (HSP60) family. As to quaternary structure, forms a cylinder of 14 subunits composed of two heptameric rings stacked back-to-back. Interacts with the co-chaperonin GroES.

Its subcellular location is the cytoplasm. It catalyses the reaction ATP + H2O + a folded polypeptide = ADP + phosphate + an unfolded polypeptide.. Functionally, together with its co-chaperonin GroES, plays an essential role in assisting protein folding. The GroEL-GroES system forms a nano-cage that allows encapsulation of the non-native substrate proteins and provides a physical environment optimized to promote and accelerate protein folding. The polypeptide is Chaperonin GroEL (Xanthomonas campestris pv. campestris (strain 8004)).